Consider the following 369-residue polypeptide: Guanine nucleotide-binding protein subunit beta-2 (369 aa).

The span at 1–24 (MSTIAGESSSSSKMPENSQPTTTE) shows a compositional bias: polar residues. Positions 1–28 (MSTIAGESSSSSKMPENSQPTTTEKGSE) are disordered. 7 WD repeats span residues 79-109 (GHVG…IVWD), 121-151 (MPTT…SVVP), 167-197 (THTS…AIWD), 209-241 (GHTG…LVWD), 253-283 (GHEA…RLFD), 297-327 (SILF…GVWD), and 339-369 (GHEN…RIWA).

It belongs to the WD repeat G protein beta family. In terms of assembly, g proteins are composed of 3 units, alpha, beta and gamma. Interacts with G protein gamma subunits gpc-1 and gpc-2 and with egl-10 and eat-16.

Functionally, guanine nucleotide-binding proteins (G proteins) are involved as a modulator or transducer in various transmembrane signaling systems. The beta and gamma chains are required for the GTPase activity, for replacement of GDP by GTP, and for G protein-effector interaction. Plays a role in regulating dopamine-mediated locomotion behavior. The sequence is that of Guanine nucleotide-binding protein subunit beta-2 from Caenorhabditis elegans.